Here is a 540-residue protein sequence, read N- to C-terminus: Chaperonin GroEL (540 aa).

ATP contacts are provided by residues 30–33 (TLGP), 87–91 (DGTTT), G415, and D496.

This sequence belongs to the chaperonin (HSP60) family. In terms of assembly, forms a cylinder of 14 subunits composed of two heptameric rings stacked back-to-back. Interacts with the co-chaperonin GroES.

Its subcellular location is the cytoplasm. The enzyme catalyses ATP + H2O + a folded polypeptide = ADP + phosphate + an unfolded polypeptide.. Functionally, together with its co-chaperonin GroES, plays an essential role in assisting protein folding. The GroEL-GroES system forms a nano-cage that allows encapsulation of the non-native substrate proteins and provides a physical environment optimized to promote and accelerate protein folding. The polypeptide is Chaperonin GroEL (Symbiobacterium thermophilum (strain DSM 24528 / JCM 14929 / IAM 14863 / T)).